The sequence spans 363 residues: tRNA N6-adenosine threonylcarbamoyltransferase (363 aa).

Residues H127 and H131 each coordinate Fe cation. Substrate is bound by residues 150–154, D183, G196, and N290; that span reads LISGG. D318 serves as a coordination point for Fe cation.

It belongs to the KAE1 / TsaD family. Fe(2+) serves as cofactor.

Its subcellular location is the cytoplasm. It catalyses the reaction L-threonylcarbamoyladenylate + adenosine(37) in tRNA = N(6)-L-threonylcarbamoyladenosine(37) in tRNA + AMP + H(+). Its function is as follows. Required for the formation of a threonylcarbamoyl group on adenosine at position 37 (t(6)A37) in tRNAs that read codons beginning with adenine. Is involved in the transfer of the threonylcarbamoyl moiety of threonylcarbamoyl-AMP (TC-AMP) to the N6 group of A37, together with TsaE and TsaB. TsaD likely plays a direct catalytic role in this reaction. The chain is tRNA N6-adenosine threonylcarbamoyltransferase from Zymomonas mobilis subsp. mobilis (strain ATCC 31821 / ZM4 / CP4).